Reading from the N-terminus, the 274-residue chain is Aliphatic sulfonates import ATP-binding protein SsuB 2 (274 aa).

An ABC transporter domain is found at 21-235 (VQLRNVVRQF…DSGQAGFQLI (215 aa)). 53–60 (GASGSGKT) serves as a coordination point for ATP.

The protein belongs to the ABC transporter superfamily. Aliphatic sulfonates importer (TC 3.A.1.17.2) family. In terms of assembly, the complex is composed of two ATP-binding proteins (SsuB), two transmembrane proteins (SsuC) and a solute-binding protein (SsuA).

The protein resides in the cell inner membrane. The enzyme catalyses ATP + H2O + aliphatic sulfonate-[sulfonate-binding protein]Side 1 = ADP + phosphate + aliphatic sulfonateSide 2 + [sulfonate-binding protein]Side 1.. Its function is as follows. Part of the ABC transporter complex SsuABC involved in aliphatic sulfonates import. Responsible for energy coupling to the transport system. The chain is Aliphatic sulfonates import ATP-binding protein SsuB 2 from Pseudomonas syringae pv. syringae (strain B728a).